A 441-amino-acid chain; its full sequence is Serine/threonine-protein phosphatase 2A activator 1 (441 aa).

Composition is skewed to polar residues over residues 66 to 75 (NIPPSNTTHS) and 421 to 432 (QRQDDLNSTTYR). Disordered stretches follow at residues 66 to 100 (NIPP…SSNQ) and 421 to 441 (QRQD…LGRN).

The protein belongs to the PTPA-type PPIase family.

The protein localises to the cytoplasm. It is found in the nucleus. The enzyme catalyses [protein]-peptidylproline (omega=180) = [protein]-peptidylproline (omega=0). PPIases accelerate the folding of proteins. It catalyzes the cis-trans isomerization of proline imidic peptide bonds in oligopeptides. Acts as a regulatory subunit for PP2A-like phosphatases modulating their activity or substrate specificity, probably by inducing a conformational change in the catalytic subunit, a direct target of the PPIase. Can reactivate inactive phosphatase PP2A-phosphatase methylesterase complexes (PP2Ai) in presence of ATP and Mg(2+) by dissociating the inactive form from the complex. In Debaryomyces hansenii (strain ATCC 36239 / CBS 767 / BCRC 21394 / JCM 1990 / NBRC 0083 / IGC 2968) (Yeast), this protein is Serine/threonine-protein phosphatase 2A activator 1 (RRD1).